Here is a 168-residue protein sequence, read N- to C-terminus: Desumoylating isopeptidase 1 (168 aa).

The PPPDE domain maps to 7 to 149; sequence YPVKLYVYDL…FGQALRPLLD (143 aa). His38 is a catalytic residue. A Nuclear export signal 1 motif is present at residues 83 to 91; sequence IFLEYLSSL. Cys108 is an active-site residue. The Nuclear export signal 2 motif lies at 139–153; that stretch reads PFGQALRPLLDSIQI.

Belongs to the DeSI family. Homodimer. Interacts with UBQLN4; leading to the export of UBQLN4 from the nucleus.

It localises to the cytoplasm. Its subcellular location is the nucleus. It carries out the reaction S-hexadecanoyl-L-cysteinyl-[protein] + H2O = L-cysteinyl-[protein] + hexadecanoate + H(+). Its activity is regulated as follows. Palmostatin B inhibits its palmitoyl protein thioesterase activity. Functionally, protease which deconjugates SUMO1, SUMO2 and SUMO3 from some substrate proteins. Has isopeptidase but not SUMO-processing activity. Desumoylates ZBTB46. Collaborates with UBQLN4 in the export of ubiquitinated proteins from the nucleus to the cytoplasm. Exhibits palmitoyl protein thioesterase (S-depalmitoylation) activity towards synthetic substrates 4-methylumbelliferyl-6-S-palmitoyl-beta-D-glucopyranoside and S-depalmitoylation probe 5 (DPP-5). The protein is Desumoylating isopeptidase 1 of Homo sapiens (Human).